Here is a 206-residue protein sequence, read N- to C-terminus: Phosphoribosyl-dephospho-CoA transferase (206 aa).

Residues Asp-131 and Asp-133 contribute to the active site.

The protein belongs to the MdcG family.

It catalyses the reaction apo-[malonate decarboxylase ACP] + 2'-(5''-triphospho-alpha-D-ribosyl)-3'-dephospho-CoA = holo-[malonate decarboxylase ACP] + diphosphate. Transfers 2'-(5-triphosphoribosyl)-3'-dephosphocoenzyme-A to the apo-[acyl-carrier-protein] of the malonate decarboxylase to yield holo-[acyl-carrier-protein]. This is Phosphoribosyl-dephospho-CoA transferase from Pseudomonas fluorescens (strain Pf0-1).